We begin with the raw amino-acid sequence, 209 residues long: MTKGILGRKIGMTQLFSDNGELIPVTVIQAEPNVVLQKKTLENDGYEALQIGFADKKESRTNKAEKGHAEKAGTAPKRYVREIRGAEVNSFEVGQEIKVDIFESGEKIDVTGTSKGKGFQGVIKRHGQQRGPTTHGSHFHRAPGAMGVIDPMRVFKGKKLPGHMGSEQVTIQNLEVVSVDTDKNLLLIKGNVPGAKKSYVKITSAVKGN.

This sequence belongs to the universal ribosomal protein uL3 family. As to quaternary structure, part of the 50S ribosomal subunit. Forms a cluster with proteins L14 and L19.

Functionally, one of the primary rRNA binding proteins, it binds directly near the 3'-end of the 23S rRNA, where it nucleates assembly of the 50S subunit. The polypeptide is Large ribosomal subunit protein uL3 (Oceanobacillus iheyensis (strain DSM 14371 / CIP 107618 / JCM 11309 / KCTC 3954 / HTE831)).